The primary structure comprises 172 residues: Alpha-crystallin A chain (172 aa).

Met-1 is subject to N-acetylmethionine. The segment at 1–63 is required for complex formation with BFSP1 and BFSP2; the sequence is MDVTIQHPWF…RTVLDSGISE (63 aa). Position 6 is a deamidated glutamine; partial (Gln-6). A Phosphoserine modification is found at Ser-45. Gln-50 is modified (deamidated glutamine; partial). A sHSP domain is found at 52–163; that stretch reads LFRTVLDSGI…HERAIPVARE (112 aa). Lys-70 carries the N6-acetyllysine modification. Residue Gln-90 is modified to Deamidated glutamine; partial. An N6-acetyllysine modification is found at Lys-99. His-100 contributes to the Zn(2+) binding site. Asn-101 carries the deamidated asparagine; partial modification. Glu-102 and His-107 together coordinate Zn(2+). A Phosphoserine modification is found at Ser-122. At Asn-123 the chain carries Deamidated asparagine; partial. Gln-147 is subject to Deamidated glutamine; partial. His-154 lines the Zn(2+) pocket. An O-linked (GlcNAc) serine glycan is attached at Ser-168.

The protein belongs to the small heat shock protein (HSP20) family. As to quaternary structure, heteromer composed of three CRYAA and one CRYAB subunits. Inter-subunit bridging via zinc ions enhances stability, which is crucial as there is no protein turn over in the lens. Can also form homodimers and homotetramers (dimers of dimers) which serve as the building blocks of homooligomers. Within homooligomers, the zinc-binding motif is created from residues of 3 different molecules. His-100 and Glu-102 from one molecule are ligands of the zinc ion, and His-107 and His-154 residues from additional molecules complete the site with tetrahedral coordination geometry. Part of a complex required for lens intermediate filament formation composed of BFSP1, BFSP2 and CRYAA. In terms of processing, acetylation at Lys-70 may increase chaperone activity. Undergoes age-dependent proteolytical cleavage at the C-terminus.

It is found in the cytoplasm. It localises to the nucleus. In terms of biological role, contributes to the transparency and refractive index of the lens. Acts as a chaperone, preventing aggregation of various proteins under a wide range of stress conditions. Required for the correct formation of lens intermediate filaments as part of a complex composed of BFSP1, BFSP2 and CRYAA. The sequence is that of Alpha-crystallin A chain (CRYAA) from Macaca mulatta (Rhesus macaque).